Consider the following 35-residue polypeptide: Tau-theraphotoxin-Pc1b (35 aa).

Intrachain disulfides connect C3–C17, C10–C22, and C16–C29. F35 bears the Phenylalanine amide mark.

This sequence belongs to the neurotoxin 10 (Hwtx-1) family. 62 (Vatx) subfamily. As to expression, expressed by the venom gland.

The protein localises to the secreted. In terms of biological role, selectively activates the mammalian capsaicin receptor TRPV1, a non-selective cation channel expressed by sensory neurons of the pain pathway. Is more potent than VaTx1, but less potent than VaTx3. Interacts with distinct regions of the channel than capsaicin, since it only acts on the extracellular face of the channel, and capsaicin binds to the cytosolic side. Also activates avian TRPV1, which is insensitive to capsaicin. Produce weak inhibition on potassium channels Kv2.1/KCNB1. The polypeptide is Tau-theraphotoxin-Pc1b (Psalmopoeus cambridgei (Trinidad chevron tarantula)).